Reading from the N-terminus, the 159-residue chain is uncharacterized protein (159 aa).

Transmembrane regions (helical) follow at residues 22 to 42 (LFSS…SFTI), 45 to 65 (PIEY…LLTL), 80 to 100 (IWVS…SLSL), and 104 to 124 (FPSL…CLAF).

It localises to the membrane. This is an uncharacterized protein from Schizosaccharomyces pombe (strain 972 / ATCC 24843) (Fission yeast).